Reading from the N-terminus, the 217-residue chain is UPF0319 protein VS_II0881 (217 aa).

A signal peptide spans 1-21 (MKTIQSIALLSAIVAAPSVLA).

Belongs to the UPF0319 family.

The sequence is that of UPF0319 protein VS_II0881 from Vibrio atlanticus (strain LGP32) (Vibrio splendidus (strain Mel32)).